The following is a 297-amino-acid chain: N-acetylmuramic acid 6-phosphate etherase (297 aa).

Residues 55–218 form the SIS domain; sequence ITKHFKQGGR…STGAMVGIGK (164 aa). The active-site Proton donor is Glu83. Glu114 is an active-site residue.

This sequence belongs to the GCKR-like family. MurNAc-6-P etherase subfamily. As to quaternary structure, homodimer.

The catalysed reaction is N-acetyl-D-muramate 6-phosphate + H2O = N-acetyl-D-glucosamine 6-phosphate + (R)-lactate. It participates in amino-sugar metabolism; N-acetylmuramate degradation. In terms of biological role, specifically catalyzes the cleavage of the D-lactyl ether substituent of MurNAc 6-phosphate, producing GlcNAc 6-phosphate and D-lactate. The chain is N-acetylmuramic acid 6-phosphate etherase from Oenococcus oeni (strain ATCC BAA-331 / PSU-1).